The sequence spans 80 residues: Sulfur carrier protein TusA (80 aa).

Cys-17 acts as the Cysteine persulfide intermediate in catalysis.

Belongs to the sulfur carrier protein TusA family.

The protein localises to the cytoplasm. Functionally, sulfur carrier protein which probably makes part of a sulfur-relay system. The polypeptide is Sulfur carrier protein TusA (Pseudomonas putida (strain W619)).